Here is a 919-residue protein sequence, read N- to C-terminus: MDYKNTLNLPKTSFPMKANLVNKEKVFLEEWEKMDLYNYVLEQRKGKPLFVLHDGPPYANGHIHIGTALNKILKDIVVKYKTMRGYRAPYVPGWDTHGLPIEHRVSQELGEKIKEMSPAEIRKKCEEFALRFVDIQREEFKRLGVRGDWENPYITLKPDYEVKILDVFKTLVEEGNVYRSLKPIYWCPRCRTALAEAEIEYHDHKSPSIYVKFRSKEDPNFFIVIWTTTPWTLPANVGIALHPDYEYSVVKVGEEKWVIATDLLDAFSKETGIDCSNVVEKIKGKDLEGKEFVHPIFDDKTSRVILADYVSLETGTGCVHIAPGHGEEDYIYGHVQYGLPIVSPVDEEGRFTEEAGKYKGMFIEDANEVIIEDLKKKGILVHASSITHSYPHCWRCKGPVIFRATEQWFISVDHNNLRQKVLEEIDKVKWIPEWGRNRIRSMVEERPDWCISRQRVWGTPIPAVKCKECGEVTLDPKVIEHFMKIVEKEGTNAWFEKEVEELIPEDFVCPKCGKRSFEKMLDTLDVWIDSGASFEYITTKREDHPFPLDMYLEGSDQHRGWFHSSIFLAVAKRGSAPYKEVLTHGFIKDEQGRKMSKSLGNVVDPMEVVEKYGAEILRLWLASSDYFNDIKISMRIVEQQTEVYRKIRNTFRFLLGNLEGFDPELDRVPYEKLLTIDRWALGRLQEIIKRATEYYDSYEFSKVYNLVVKYCTTELSSLYLDVVKDRLYVEAKDSIYRRSAQTVMHEILIALMKILAPIMTFTMEEVYSHLHEKDRKYKTVQAEYWPEYKEEFIDRELMEDFEKLLSIREDVLKALEEKRQQDVIGHSLDAEVVLVPKNDTIKALLEKYRDILEELFIVSKVSLSDASGELKGELVEVTVKHAEGEKCQRCWKYTTEISTSEDFPGVCPRCLAVLKGERK.

A 'HIGH' region motif is present at residues 57 to 67 (PYANGHIHIGT). Glu-553 serves as a coordination point for L-isoleucyl-5'-AMP. Positions 594-598 (KMSKS) match the 'KMSKS' region motif. Lys-597 lines the ATP pocket. Positions 887, 890, 907, and 910 each coordinate Zn(2+).

It belongs to the class-I aminoacyl-tRNA synthetase family. IleS type 1 subfamily. As to quaternary structure, monomer. Zn(2+) serves as cofactor.

It localises to the cytoplasm. It catalyses the reaction tRNA(Ile) + L-isoleucine + ATP = L-isoleucyl-tRNA(Ile) + AMP + diphosphate. Its function is as follows. Catalyzes the attachment of isoleucine to tRNA(Ile). As IleRS can inadvertently accommodate and process structurally similar amino acids such as valine, to avoid such errors it has two additional distinct tRNA(Ile)-dependent editing activities. One activity is designated as 'pretransfer' editing and involves the hydrolysis of activated Val-AMP. The other activity is designated 'posttransfer' editing and involves deacylation of mischarged Val-tRNA(Ile). This chain is Isoleucine--tRNA ligase, found in Thermotoga petrophila (strain ATCC BAA-488 / DSM 13995 / JCM 10881 / RKU-1).